Consider the following 264-residue polypeptide: Protein DSE2 (264 aa).

The first 23 residues, 1–23 (MQFKKSSIVSFLSLLGSLTKAAA), serve as a signal peptide directing secretion. Low complexity predominate over residues 75 to 92 (TRESVVTSTLSSTSLLPE). The interval 75–213 (TRESVVTSTL…STSTSSSSVL (139 aa)) is disordered. The segment covering 93-104 (TTEESTQEDEQT) has biased composition (acidic residues). 3 stretches are compositionally biased toward low complexity: residues 105-147 (TDFT…PTTS), 157-168 (STSVITTKSTSK), and 178-211 (TSTL…SSSS). Aspartate 247 carries the GPI-anchor amidated aspartate lipid modification. Positions 248–264 (AATTYTKTRTVYATISS) are cleaved as a propeptide — removed in mature form.

The protein resides in the secreted. It localises to the cell wall. It is found in the membrane. Involved in pseudohyphal growth, cell wall metabolism and required for the separation of the mother and daughter cells. In Kluyveromyces lactis (strain ATCC 8585 / CBS 2359 / DSM 70799 / NBRC 1267 / NRRL Y-1140 / WM37) (Yeast), this protein is Protein DSE2 (DSE2).